A 228-amino-acid polypeptide reads, in one-letter code: MSDPVLALRGLERVYKTEAGDLPVLRGVDLDVYPGEVVGLIGPSGSGKSSLLHSAGLLERPDAGLVALEGRDCSKLSERARTRIRLGTVGFVYQFHHLLPEFSALENVAMPLTIAGKSRREAEARARELLESLGLGHRLNHQPAQMSGGEQQRVAIARALANRPKLLLADEPTGNLDPATSTAVFQALYQVCREQGVAAVIATHNMELARYMDRVVALKDGHLELQRV.

The ABC transporter domain maps to arginine 9–valine 228. Glycine 42–serine 49 lines the ATP pocket.

The protein belongs to the ABC transporter superfamily. Lipoprotein translocase (TC 3.A.1.125) family. In terms of assembly, the complex is composed of two ATP-binding proteins (LolD) and two transmembrane proteins (LolC and LolE).

It is found in the cell inner membrane. In terms of biological role, part of the ABC transporter complex LolCDE involved in the translocation of mature outer membrane-directed lipoproteins, from the inner membrane to the periplasmic chaperone, LolA. Responsible for the formation of the LolA-lipoprotein complex in an ATP-dependent manner. The polypeptide is Lipoprotein-releasing system ATP-binding protein LolD 2 (Caulobacter vibrioides (strain ATCC 19089 / CIP 103742 / CB 15) (Caulobacter crescentus)).